Reading from the N-terminus, the 475-residue chain is BTB/POZ domain-containing protein 10 (475 aa).

The interval 1-143 (MAGRPHPYDG…SSQSSSDGSC (143 aa)) is disordered. Positions 22 to 31 (LHSRPRKLYK) are enriched in basic residues. The segment covering 57-80 (GHERSRDRRRSSDRSRDSSHERTE) has biased composition (basic and acidic residues). Over residues 81–94 (SQLTPCIRNVTSPT) the composition is skewed to polar residues. The segment covering 97-107 (HHVEREKDHSS) has biased composition (basic and acidic residues). The segment covering 108–142 (SRPSSPRPQKASPNGSISSAGNSSRNSSQSSSDGS) has biased composition (low complexity). An interaction with AKT family members region spans residues 146 to 475 (AGEMVFVYEN…LDPDAQNPML (330 aa)). Residues 167–241 (ERVTLIVDNT…YKTGIIRCPD (75 aa)) enclose the BTB domain. Positions 455-475 (LPIHPPSGNSDLDPDAQNPML) are disordered.

As to quaternary structure, interacts (via C-terminal 330-amino-acid region) with AKT1; AKT2 and AKT3. Interacts with PPP2CA and PPP1CA. In terms of tissue distribution, ubiquitously expressed. Highly expressed in adult brain, testis, aorta and small intestine and weakly expressed in the heart, lung, liver, kidney, pancreas, spleen, thymus, prostate, ovary and colon. Down-regulated in glioma.

It localises to the nucleus. The protein resides in the cytoplasm. In terms of biological role, plays a major role as an activator of AKT family members by inhibiting PPP2CA-mediated dephosphorylation, thereby keeping AKTs activated. Plays a role in preventing motor neuronal death and accelerating the growth of pancreatic beta cells. This chain is BTB/POZ domain-containing protein 10 (BTBD10), found in Homo sapiens (Human).